The chain runs to 481 residues: ATP synthase subunit beta, chloroplastic (481 aa).

An ATP-binding site is contributed by 162 to 169; it reads GGAGVGKT.

The protein belongs to the ATPase alpha/beta chains family. As to quaternary structure, F-type ATPases have 2 components, F(1) - the catalytic core - and F(0) - the membrane proton channel. F(1) has five subunits: alpha(3), beta(3), gamma(1), delta(1), epsilon(1). F(0) has four main subunits: a(1), b(1), b'(1) and c(10-14). The alpha and beta chains form an alternating ring which encloses part of the gamma chain. F(1) is attached to F(0) by a central stalk formed by the gamma and epsilon chains, while a peripheral stalk is formed by the delta, b and b' chains.

It is found in the plastid. Its subcellular location is the chloroplast thylakoid membrane. It carries out the reaction ATP + H2O + 4 H(+)(in) = ADP + phosphate + 5 H(+)(out). In terms of biological role, f(1)F(0) ATP synthase produces ATP from ADP in the presence of a proton or sodium gradient. F-type ATPases consist of two structural domains, F(1) containing the extramembraneous catalytic core and F(0) containing the membrane proton channel, linked together by a central stalk and a peripheral stalk. During catalysis, ATP synthesis in the catalytic domain of F(1) is coupled via a rotary mechanism of the central stalk subunits to proton translocation. Produces ATP from ADP in the presence of a proton gradient across the membrane. The catalytic sites are hosted primarily by the beta subunits. The protein is ATP synthase subunit beta, chloroplastic of Chlamydomonas reinhardtii (Chlamydomonas smithii).